The chain runs to 428 residues: Histidine--tRNA ligase (428 aa).

It belongs to the class-II aminoacyl-tRNA synthetase family. Homodimer.

Its subcellular location is the cytoplasm. The catalysed reaction is tRNA(His) + L-histidine + ATP = L-histidyl-tRNA(His) + AMP + diphosphate + H(+). The chain is Histidine--tRNA ligase from Lactobacillus delbrueckii subsp. bulgaricus (strain ATCC BAA-365 / Lb-18).